The chain runs to 247 residues: uncharacterized protein (247 aa).

A signal peptide spans 1–35; the sequence is MWGPGVTAEGLSVAPAPPPLLPLLLLLALALVAPS. Residues 82 to 102 traverse the membrane as a helical segment; that stretch reads LSGLLILLVLFAIGYFLQRII. The interval 109-176 is disordered; sequence YPRGQARPGQ…RGSGGRLPPS (68 aa). Over residues 111–120 the composition is skewed to low complexity; it reads RGQARPGQAR. The span at 161-171 shows a compositional bias: gly residues; that stretch reads SGGGRGRGSGG.

The protein localises to the membrane. This is an uncharacterized protein from Mus musculus (Mouse).